Here is a 334-residue protein sequence, read N- to C-terminus: Chemotactic signal transduction system substrate-binding protein CosB (334 aa).

Positions 1-29 (MMDTPEHASTSSRRQLLGMLAAGGTTAVA) are cleaved as a signal peptide.

It belongs to the OsmX family.

Its subcellular location is the cell membrane. Functionally, mediates chemotaxis towards compatible osmolytes. May function as a receptor that binds the osmolytes and transduces a signal to CosT. Has probably no additional role in transport. The protein is Chemotactic signal transduction system substrate-binding protein CosB (cosB) of Halobacterium salinarum (strain ATCC 29341 / DSM 671 / R1).